The sequence spans 96 residues: Co-chaperonin GroES (96 aa).

The protein belongs to the GroES chaperonin family. As to quaternary structure, heptamer of 7 subunits arranged in a ring. Interacts with the chaperonin GroEL.

The protein resides in the cytoplasm. In terms of biological role, together with the chaperonin GroEL, plays an essential role in assisting protein folding. The GroEL-GroES system forms a nano-cage that allows encapsulation of the non-native substrate proteins and provides a physical environment optimized to promote and accelerate protein folding. GroES binds to the apical surface of the GroEL ring, thereby capping the opening of the GroEL channel. This chain is Co-chaperonin GroES, found in Solidesulfovibrio magneticus (strain ATCC 700980 / DSM 13731 / RS-1) (Desulfovibrio magneticus).